Here is a 464-residue protein sequence, read N- to C-terminus: Galactose-proton symporter (464 aa).

Topologically, residues 1–15 (MPDAKKQGRSNKAMT) are cytoplasmic. A helical membrane pass occupies residues 16–36 (FFVCFLAALAGLLFGLDIGVI). Topologically, residues 37–56 (AGALPFIADEFQITSHTQEW) are periplasmic. Residues 57-77 (VVSSMMFGAAVGAVGSGWLSF) form a helical membrane-spanning segment. Residues 78-84 (KLGRKKS) lie on the Cytoplasmic side of the membrane. The helical transmembrane segment at 85–105 (LMIGAILFVAGSLFSAAAPNV) threads the bilayer. Residues 106–112 (EVLILSR) are Periplasmic-facing. Residues 113–133 (VLLGLAVGVASYTAPLYLSEI) form a helical membrane-spanning segment. Residues 134-139 (APEKIR) are Cytoplasmic-facing. Residues 140–160 (GSMISMYQLMITIGILGAYLS) form a helical membrane-spanning segment. Topologically, residues 161–171 (DTAFSYTGAWR) are periplasmic. The chain crosses the membrane as a helical span at residues 172-192 (WMLGVIIIPAILLLIGVFFLP). The Cytoplasmic segment spans residues 193–250 (DSPRWFAAKRRFVDAERVLLRLRDTSAEAKRELDEIRESLQVKQSGWALFKENSNFRR). The helical transmembrane segment at 251–271 (AVFLGVLLQVMQQFTGMNVIM) threads the bilayer. Over 272–290 (YYAPKIFELAGYTNTTEQM) the chain is Periplasmic. Residues 291-311 (WGTVIVGLTNVLATFIAIGLV) form a helical membrane-spanning segment. The Cytoplasmic portion of the chain corresponds to 312–321 (DRWGRKPTLT). The helical transmembrane segment at 322-342 (LGFLVMAAGMGVLGTMMHIGI) threads the bilayer. The Periplasmic segment spans residues 343–351 (HSPSAQYFA). The helical transmembrane segment at 352–372 (IAMLLMFIVGFAMSAGPLIWV) threads the bilayer. Residues 373–394 (LCSEIQPLKGRDFGITCSTATN) lie on the Cytoplasmic side of the membrane. A helical transmembrane segment spans residues 395–415 (WIANMIVGATFLTMLNTLGNA). Residue asparagine 416 is a topological domain, periplasmic. A helical transmembrane segment spans residues 417-437 (TFWVYAALNVLFILLTLWLVP). Residues 438-464 (ETKHVSLEHIERNLMKGRKLREIGAHD) are Cytoplasmic-facing.

This sequence belongs to the major facilitator superfamily. Sugar transporter (TC 2.A.1.1) family.

It is found in the cell inner membrane. Functionally, uptake of galactose across the boundary membrane with the concomitant transport of protons into the cell (symport system). The polypeptide is Galactose-proton symporter (galP) (Escherichia coli O6:H1 (strain CFT073 / ATCC 700928 / UPEC)).